Reading from the N-terminus, the 81-residue chain is Defensin-like protein 115 (81 aa).

The first 24 residues, 1-24 (MAITKKMLVVFLLAFLFVTSSVHC), serve as a signal peptide directing secretion. Intrachain disulfides connect Cys-40–Cys-78, Cys-46–Cys-69, Cys-54–Cys-76, and Cys-58–Cys-77.

Belongs to the DEFL family.

It is found in the secreted. This chain is Defensin-like protein 115, found in Arabidopsis thaliana (Mouse-ear cress).